A 980-amino-acid polypeptide reads, in one-letter code: Ovochymase-2 (980 aa).

The N-terminal stretch at M1–G21 is a signal peptide. The propeptide at A22–R49 is activation peptide. Residue N39 is glycosylated (N-linked (GlcNAc...) asparagine). The 250-residue stretch at I50–N299 folds into the Peptidase S1 1 domain. An intrachain disulfide couples C75 to C91. The active-site Charge relay system is H90. Positions 112 and 117 each coordinate Ca(2+). The active-site Charge relay system is D140. 11 cysteine pairs are disulfide-bonded: C174–C244, C205–C223, C234–C263, C312–C342, C369–C388, C435–C462, C489–C510, C618–C634, C716–C779, C744–C757, and C769–C798. S238 (charge relay system) is an active-site residue. CUB domains follow at residues C312–V425 and C435–V547. The Peptidase S1 2 domain occupies I593–L822. Positions I593–N980 are cleaved as a propeptide — activation peptide. N766 carries N-linked (GlcNAc...) asparagine glycosylation. Positions H835–S863 are disordered. N858 and N932 each carry an N-linked (GlcNAc...) asparagine glycan.

This sequence belongs to the peptidase S1 family. In terms of processing, the catalytically inactive 108 kDa form is processed both N- and C-terminally to give rise to catalytically active and inactive forms. As to expression, differentially expressed in the oviductal pars recta (PR) region.

It localises to the secreted. It carries out the reaction Preferential cleavage at 371-Gly-Ser-Arg-|-Trp-374 of glycoprotein gp43 in Xenopus laevis coelemic egg envelope to yield gp41.. In terms of biological role, mediates gamete interaction by affecting the vitelline coat. The sequence is that of Ovochymase-2 (OVCH2) from Rhinella arenarum (Argentine common toad).